Here is an 80-residue protein sequence, read N- to C-terminus: Large ribosomal subunit protein bL31B (80 aa).

The protein belongs to the bacterial ribosomal protein bL31 family. Type B subfamily. In terms of assembly, part of the 50S ribosomal subunit.

The chain is Large ribosomal subunit protein bL31B from Stenotrophomonas maltophilia (strain K279a).